Consider the following 550-residue polypeptide: Zinc finger protein 426 (550 aa).

Residues 39–110 (VSFEDVIVDF…KIVFPEWKLQ (72 aa)) enclose the KRAB domain. 11 consecutive C2H2-type zinc fingers follow at residues 219–241 (FECS…QRTH), 274–296 (HRCK…MRTH), 302–324 (YECK…GRTH), 330–352 (YVCS…VRSH), 358–380 (YGCK…IRTH), 386–408 (FVCV…LKLH), 414–436 (CECK…MRTH), 442–464 (YTCK…MRIH), 470–492 (YECK…ERTH), 498–522 (YECK…SHTH), and 528–550 (YKCQ…ERIH).

It is found in the nucleus. Functionally, may be involved in transcriptional regulation. This chain is Zinc finger protein 426 (Znf426), found in Mus musculus (Mouse).